The chain runs to 238 residues: Purine nucleoside phosphorylase DeoD-type (238 aa).

Residue His-4 coordinates a purine D-ribonucleoside. Residues Gly-20, Arg-24, Arg-43, and 87 to 90 (RVGS) contribute to the phosphate site. Residues 179–181 (EME) and 203–204 (SD) contribute to the a purine D-ribonucleoside site. Residue Asp-204 is the Proton donor of the active site.

The protein belongs to the PNP/UDP phosphorylase family. In terms of assembly, homohexamer; trimer of homodimers.

It carries out the reaction a purine D-ribonucleoside + phosphate = a purine nucleobase + alpha-D-ribose 1-phosphate. The enzyme catalyses a purine 2'-deoxy-D-ribonucleoside + phosphate = a purine nucleobase + 2-deoxy-alpha-D-ribose 1-phosphate. Its function is as follows. Catalyzes the reversible phosphorolytic breakdown of the N-glycosidic bond in the beta-(deoxy)ribonucleoside molecules, with the formation of the corresponding free purine bases and pentose-1-phosphate. The chain is Purine nucleoside phosphorylase DeoD-type from Histophilus somni (strain 2336) (Haemophilus somnus).